The sequence spans 410 residues: Elongation factor Tu (410 aa).

Positions 10 to 219 (KTHVNVGTIG…ALDTYIPDPV (210 aa)) constitute a tr-type G domain. Residues 19 to 26 (GHVDHGKT), 88 to 92 (DCPGH), and 143 to 146 (NKCD) contribute to the GTP site. Threonine 26 contributes to the Mg(2+) binding site.

The protein belongs to the TRAFAC class translation factor GTPase superfamily. Classic translation factor GTPase family. EF-Tu/EF-1A subfamily. In terms of assembly, monomer.

The protein localises to the cytoplasm. The catalysed reaction is GTP + H2O = GDP + phosphate + H(+). Functionally, GTP hydrolase that promotes the GTP-dependent binding of aminoacyl-tRNA to the A-site of ribosomes during protein biosynthesis. This is Elongation factor Tu from Brachyspira hyodysenteriae (Treponema hyodysenteriae).